A 493-amino-acid chain; its full sequence is MNNAEVLNVALDEDSSNSNDDLNYSEYQPKNHPIKSHYDMDIENVHFLLEPTMSKKKCETEYLPGTTSFGMSVFNLSNAIVGSGILGLSYAMANTGIALFMILLVFVTVFSLYSIHLLLKTANEGGSLLYEQLGLKAFGIPGKLAASGSVTLQNIGAMSSYLYIVKYELPLVIKALMDIKESNGEWYLNGDYLVIMVSLAIILPLSLLRNLGYLGYTSGFSPLCMVFFLIVVIYKKFEIPCPLEAMNMTSNSSSHDHMAHNETDDEMCKPKYFVFNSQTVYAVPILTFSFVCHPAVLPIYQELKGRSRRRMMNVSNVSFFAMFIMYLLAALFGYLTFYSKVEPELLHTYSKVFGAGVIFVVVRLAVLMAVTLTVPIVIFPIRSSLNELFCSGKDFAWIRHILITFLILAFTNVLVIFVPTIRDIFGFIGASAAAMLVFILPSAFYIRLVKKESMKSVQKIGALLFLIGGIIVMIGSMTLIILDWIHNSTSGGN.

The Cytoplasmic segment spans residues 1 to 72; it reads MNNAEVLNVA…LPGTTSFGMS (72 aa). Positions 1-92 are regulates protein turnover upon amino acid deprivation; sequence MNNAEVLNVA…SGILGLSYAM (92 aa). Residues 73–92 traverse the membrane as a helical segment; it reads VFNLSNAIVGSGILGLSYAM. Na(+) is bound at residue N78. Residues 93–98 lie on the Extracellular side of the membrane; that stretch reads ANTGIA. Residues 99-119 traverse the membrane as a helical segment; the sequence is LFMILLVFVTVFSLYSIHLLL. The Cytoplasmic segment spans residues 120-154; the sequence is KTANEGGSLLYEQLGLKAFGIPGKLAASGSVTLQN. The helical transmembrane segment at 155–173 threads the bilayer; it reads IGAMSSYLYIVKYELPLVI. Residues 174–184 are Extracellular-facing; it reads KALMDIKESNG. Residues 185–205 form a helical membrane-spanning segment; it reads EWYLNGDYLVIMVSLAIILPL. The Cytoplasmic segment spans residues 206-213; the sequence is SLLRNLGY. The chain crosses the membrane as a helical span at residues 214–234; that stretch reads LGYTSGFSPLCMVFFLIVVIY. Residues 235-279 lie on the Extracellular side of the membrane; the sequence is KKFEIPCPLEAMNMTSNSSSHDHMAHNETDDEMCKPKYFVFNSQT. The cysteines at positions 241 and 268 are disulfide-linked. N-linked (GlcNAc...) asparagine glycosylation is found at N247, N251, and N261. Residues 280–300 form a helical membrane-spanning segment; the sequence is VYAVPILTFSFVCHPAVLPIY. The Cytoplasmic segment spans residues 301–316; sequence QELKGRSRRRMMNVSN. A helical transmembrane segment spans residues 317 to 337; sequence VSFFAMFIMYLLAALFGYLTF. Residues 338–358 are Extracellular-facing; sequence YSKVEPELLHTYSKVFGAGVI. Residues 359-379 traverse the membrane as a helical segment; sequence FVVVRLAVLMAVTLTVPIVIF. Residue T373 participates in Na(+) binding. Residues 380-400 lie on the Cytoplasmic side of the membrane; that stretch reads PIRSSLNELFCSGKDFAWIRH. The helical transmembrane segment at 401–421 threads the bilayer; the sequence is ILITFLILAFTNVLVIFVPTI. Over 422–423 the chain is Extracellular; sequence RD. Residues 424-444 form a helical membrane-spanning segment; it reads IFGFIGASAAAMLVFILPSAF. The Cytoplasmic portion of the chain corresponds to 445–459; it reads YIRLVKKESMKSVQK. A helical membrane pass occupies residues 460–482; that stretch reads IGALLFLIGGIIVMIGSMTLIIL. At 483–493 the chain is on the extracellular side; it reads DWIHNSTSGGN.

It belongs to the amino acid/polyamine transporter 2 family.

The protein localises to the cell membrane. It carries out the reaction L-alanine(in) + Na(+)(in) = L-alanine(out) + Na(+)(out). It catalyses the reaction glycine(in) + Na(+)(in) = glycine(out) + Na(+)(out). The catalysed reaction is L-serine(in) + Na(+)(in) = L-serine(out) + Na(+)(out). The enzyme catalyses L-proline(in) + Na(+)(in) = L-proline(out) + Na(+)(out). It carries out the reaction L-methionine(in) + Na(+)(in) = L-methionine(out) + Na(+)(out). It catalyses the reaction L-histidine(in) + Na(+)(in) = L-histidine(out) + Na(+)(out). The catalysed reaction is L-asparagine(in) + Na(+)(in) = L-asparagine(out) + Na(+)(out). The enzyme catalyses L-glutamine(in) + Na(+)(in) = L-glutamine(out) + Na(+)(out). It carries out the reaction L-threonine(in) + Na(+)(in) = L-threonine(out) + Na(+)(out). It catalyses the reaction L-leucine(in) + Na(+)(in) = L-leucine(out) + Na(+)(out). The catalysed reaction is L-phenylalanine(in) + Na(+)(in) = L-phenylalanine(out) + Na(+)(out). With respect to regulation, inhibited by N-methyl-D-glucamine. Inhibited by choline. Allosteric regulation of sodium ions binding by pH. Functionally, symporter that cotransports neutral amino acids and sodium ions from the extracellular to the intracellular side of the cell membrane. The transport is pH-sensitive, Li(+)-intolerant, electrogenic, driven by the Na(+) electrochemical gradient and cotransports of neutral amino acids and sodium ions with a stoichiometry of 1:1. The polypeptide is Sodium-coupled neutral amino acid symporter 2 (Xenopus tropicalis (Western clawed frog)).